A 518-amino-acid chain; its full sequence is Sensor protein kinase HptS (518 aa).

2 helical membrane-spanning segments follow: residues 20-40 and 222-242; these read IFPV…IYIW and GITL…FGFI. The Histidine kinase domain maps to 297–513; the sequence is EQLIHSIEHT…LICYKIPLSR (217 aa). Position 325 is a phosphohistidine; by autocatalysis (H325).

In terms of processing, autophosphorylated.

The protein resides in the cell membrane. The catalysed reaction is ATP + protein L-histidine = ADP + protein N-phospho-L-histidine.. Member of the two-component regulatory system HptS/HptR that regulates genes involved in hexose phosphate transport system in response to changes in extracellular phosphate sources. May act as a sensor protein kinase which is autophosphorylated at a histidine residue and transfers its phosphate group to the conserved aspartic acid residue in the regulatory domain of HptS. In turn, HptS antagonizes CcpA-dependent transcription of a subset of CcpA-regulated genes involved in antibiotic susceptibility. The sequence is that of Sensor protein kinase HptS (hptS) from Staphylococcus aureus (strain USA300).